The primary structure comprises 134 residues: uncharacterized protein (134 aa).

The helical transmembrane segment at 110-130 threads the bilayer; sequence SLGVLTDILFLVLYSLLIHLS.

It localises to the membrane. This is an uncharacterized protein from Saccharomyces cerevisiae (strain ATCC 204508 / S288c) (Baker's yeast).